The following is a 211-amino-acid chain: MLTIALSKGRILDDTLPLLAAAGIVPSENPDKSRKLIIPTSLSDVRLLIVRATDVPTYVEHGAADLGVAGKDVLMEYGGQGLYEPLDLRIANCKLMTAGAIGAPEPKGRLRVATKFVNVAKRYYAEQGRQVDVIKLYGSMELAPLVGLADKIIDVVDTGNTLRANGLEPQELIATISSRLVVNKASMKMQHGRIQSLIDTLRDAVEARHRH.

Belongs to the ATP phosphoribosyltransferase family. Short subfamily. In terms of assembly, heteromultimer composed of HisG and HisZ subunits.

Its subcellular location is the cytoplasm. It carries out the reaction 1-(5-phospho-beta-D-ribosyl)-ATP + diphosphate = 5-phospho-alpha-D-ribose 1-diphosphate + ATP. It participates in amino-acid biosynthesis; L-histidine biosynthesis; L-histidine from 5-phospho-alpha-D-ribose 1-diphosphate: step 1/9. Functionally, catalyzes the condensation of ATP and 5-phosphoribose 1-diphosphate to form N'-(5'-phosphoribosyl)-ATP (PR-ATP). Has a crucial role in the pathway because the rate of histidine biosynthesis seems to be controlled primarily by regulation of HisG enzymatic activity. This Pseudomonas aeruginosa (strain ATCC 15692 / DSM 22644 / CIP 104116 / JCM 14847 / LMG 12228 / 1C / PRS 101 / PAO1) protein is ATP phosphoribosyltransferase (hisG).